The following is a 413-amino-acid chain: Glutamate-1-semialdehyde 2,1-aminomutase (413 aa).

At Lys260 the chain carries N6-(pyridoxal phosphate)lysine.

Belongs to the class-III pyridoxal-phosphate-dependent aminotransferase family. HemL subfamily. Pyridoxal 5'-phosphate is required as a cofactor.

The protein localises to the cytoplasm. The enzyme catalyses (S)-4-amino-5-oxopentanoate = 5-aminolevulinate. The protein operates within porphyrin-containing compound metabolism; protoporphyrin-IX biosynthesis; 5-aminolevulinate from L-glutamyl-tRNA(Glu): step 2/2. In Methanoregula boonei (strain DSM 21154 / JCM 14090 / 6A8), this protein is Glutamate-1-semialdehyde 2,1-aminomutase.